Here is a 351-residue protein sequence, read N- to C-terminus: uncharacterized protein (351 aa).

5 residues coordinate Mn(2+): D215, D226, H290, E319, and E333.

This sequence belongs to the peptidase M24B family. Requires Mn(2+) as cofactor.

This is an uncharacterized protein from Staphylococcus aureus (strain MSSA476).